The sequence spans 236 residues: Leucyl/phenylalanyl-tRNA--protein transferase (236 aa).

It belongs to the L/F-transferase family.

The protein localises to the cytoplasm. The enzyme catalyses N-terminal L-lysyl-[protein] + L-leucyl-tRNA(Leu) = N-terminal L-leucyl-L-lysyl-[protein] + tRNA(Leu) + H(+). The catalysed reaction is N-terminal L-arginyl-[protein] + L-leucyl-tRNA(Leu) = N-terminal L-leucyl-L-arginyl-[protein] + tRNA(Leu) + H(+). It carries out the reaction L-phenylalanyl-tRNA(Phe) + an N-terminal L-alpha-aminoacyl-[protein] = an N-terminal L-phenylalanyl-L-alpha-aminoacyl-[protein] + tRNA(Phe). In terms of biological role, functions in the N-end rule pathway of protein degradation where it conjugates Leu, Phe and, less efficiently, Met from aminoacyl-tRNAs to the N-termini of proteins containing an N-terminal arginine or lysine. The sequence is that of Leucyl/phenylalanyl-tRNA--protein transferase from Idiomarina loihiensis (strain ATCC BAA-735 / DSM 15497 / L2-TR).